Consider the following 208-residue polypeptide: Methylthioribulose-1-phosphate dehydratase (208 aa).

The Zn(2+) site is built by His98 and His100.

It belongs to the aldolase class II family. MtnB subfamily. Requires Zn(2+) as cofactor.

The catalysed reaction is 5-(methylsulfanyl)-D-ribulose 1-phosphate = 5-methylsulfanyl-2,3-dioxopentyl phosphate + H2O. It functions in the pathway amino-acid biosynthesis; L-methionine biosynthesis via salvage pathway; L-methionine from S-methyl-5-thio-alpha-D-ribose 1-phosphate: step 2/6. Its function is as follows. Catalyzes the dehydration of methylthioribulose-1-phosphate (MTRu-1-P) into 2,3-diketo-5-methylthiopentyl-1-phosphate (DK-MTP-1-P). The protein is Methylthioribulose-1-phosphate dehydratase of Hahella chejuensis (strain KCTC 2396).